Here is a 98-residue protein sequence, read N- to C-terminus: NADH-ubiquinone oxidoreductase chain 4L (98 aa).

3 consecutive transmembrane segments (helical) span residues Pro-2–Phe-22, Ser-29–Leu-49, and Ile-61–Val-81.

The protein belongs to the complex I subunit 4L family. Core subunit of respiratory chain NADH dehydrogenase (Complex I) which is composed of 45 different subunits.

The protein localises to the mitochondrion inner membrane. It catalyses the reaction a ubiquinone + NADH + 5 H(+)(in) = a ubiquinol + NAD(+) + 4 H(+)(out). Functionally, core subunit of the mitochondrial membrane respiratory chain NADH dehydrogenase (Complex I) which catalyzes electron transfer from NADH through the respiratory chain, using ubiquinone as an electron acceptor. Part of the enzyme membrane arm which is embedded in the lipid bilayer and involved in proton translocation. The sequence is that of NADH-ubiquinone oxidoreductase chain 4L (MT-ND4L) from Microcebus mamiratra (Claire's mouse lemur).